Consider the following 338-residue polypeptide: NADPH dehydrogenase (338 aa).

An FMN-binding site is contributed by 22-25; it reads SPMC. A substrate-binding site is contributed by tyrosine 27. FMN-binding residues include alanine 59 and glutamine 101. 163 to 166 serves as a coordination point for substrate; it reads HAAH. FMN is bound by residues arginine 214 and 306 to 307; that span reads GR.

The protein belongs to the NADH:flavin oxidoreductase/NADH oxidase family. NamA subfamily. As to quaternary structure, homotetramer. Requires FMN as cofactor.

The catalysed reaction is A + NADPH + H(+) = AH2 + NADP(+). In terms of biological role, catalyzes the reduction of the double bond of an array of alpha,beta-unsaturated aldehydes and ketones. It also reduces the nitro group of nitroester and nitroaromatic compounds. It could have a role in detoxification processes. This is NADPH dehydrogenase from Listeria welshimeri serovar 6b (strain ATCC 35897 / DSM 20650 / CCUG 15529 / CIP 8149 / NCTC 11857 / SLCC 5334 / V8).